The chain runs to 318 residues: Methionyl-tRNA formyltransferase (318 aa).

(6S)-5,6,7,8-tetrahydrofolate is bound at residue Ser117 to Pro120.

Belongs to the Fmt family.

The catalysed reaction is L-methionyl-tRNA(fMet) + (6R)-10-formyltetrahydrofolate = N-formyl-L-methionyl-tRNA(fMet) + (6S)-5,6,7,8-tetrahydrofolate + H(+). Functionally, attaches a formyl group to the free amino group of methionyl-tRNA(fMet). The formyl group appears to play a dual role in the initiator identity of N-formylmethionyl-tRNA by promoting its recognition by IF2 and preventing the misappropriation of this tRNA by the elongation apparatus. The protein is Methionyl-tRNA formyltransferase of Malacoplasma penetrans (strain HF-2) (Mycoplasma penetrans).